Reading from the N-terminus, the 64-residue chain is MAVQKSRVTPSRRGQRRSHDALTAKQLSTDPTSGEIHLRHHITADGYYRGKKVIATKSSAVQED.

Positions methionine 1–glutamate 35 are disordered.

This sequence belongs to the bacterial ribosomal protein bL32 family.

The protein is Large ribosomal subunit protein bL32 of Xanthomonas axonopodis pv. citri (strain 306).